A 782-amino-acid polypeptide reads, in one-letter code: E3 ubiquitin-protein ligase SopA (782 aa).

Residues Ser140 to Pro170 are disordered. The segment covering Pro157 to Pro170 has biased composition (low complexity). The active-site Glycyl thioester intermediate is Cys753.

It belongs to the SopA E3 ligase family. Ubiquitinated in the presence of host E1 ubiquitin-activating enzyme, E2 ubiquitin-conjugating enzyme and ubiquitin.

The protein localises to the secreted. It localises to the host cell. It carries out the reaction S-ubiquitinyl-[E2 ubiquitin-conjugating enzyme]-L-cysteine + [acceptor protein]-L-lysine = [E2 ubiquitin-conjugating enzyme]-L-cysteine + N(6)-ubiquitinyl-[acceptor protein]-L-lysine.. Its function is as follows. Effector proteins function to alter host cell physiology and promote bacterial survival in host tissues. This protein is an E3 ubiquitin ligase that interferes with host's ubiquitination pathway. The sequence is that of E3 ubiquitin-protein ligase SopA (sopA) from Salmonella agona (strain SL483).